A 66-amino-acid polypeptide reads, in one-letter code: LYR motif-containing protein PHYPADRAFT_186863 (66 aa).

The protein belongs to the complex I LYR family. LYRM9 subfamily.

In Physcomitrium patens (Spreading-leaved earth moss), this protein is LYR motif-containing protein PHYPADRAFT_186863.